Consider the following 365-residue polypeptide: Magnesium-chelatase subunit ChlI homolog (365 aa).

40–47 is a binding site for ATP; it reads EKGTAKST. The interval 340–365 is disordered; that stretch reads FKQQNNKDNEEKEEHKDDDVKKNMMK. The span at 344–365 shows a compositional bias: basic and acidic residues; that stretch reads NNKDNEEKEEHKDDDVKKNMMK.

It belongs to the Mg-chelatase subunits D/I family.

This Methanocaldococcus jannaschii (strain ATCC 43067 / DSM 2661 / JAL-1 / JCM 10045 / NBRC 100440) (Methanococcus jannaschii) protein is Magnesium-chelatase subunit ChlI homolog.